The following is a 1064-amino-acid chain: Error-prone DNA polymerase (1064 aa).

Belongs to the DNA polymerase type-C family. DnaE2 subfamily.

It localises to the cytoplasm. The enzyme catalyses DNA(n) + a 2'-deoxyribonucleoside 5'-triphosphate = DNA(n+1) + diphosphate. In terms of biological role, DNA polymerase involved in damage-induced mutagenesis and translesion synthesis (TLS). It is not the major replicative DNA polymerase. The polypeptide is Error-prone DNA polymerase (Azoarcus sp. (strain BH72)).